The primary structure comprises 337 residues: Molybdate import system permease protein MolB (337 aa).

Residues 1–5 (MQPDS) are Cytoplasmic-facing. Residues 6-25 (YPKILFGLTLLLVITAVISL) traverse the membrane as a helical segment. The Periplasmic portion of the chain corresponds to 26–51 (GIGRYSLSVPQIGQILWAKATALEID). A helical transmembrane segment spans residues 52–87 (PVQQQVIFQVRLPRILTALCVGAGLALSGVVLQGIF). Residues 88–98 (RNPLVNPHIIG) lie on the Cytoplasmic side of the membrane. Residues 99–113 (VTSGSAFGGTLAIFF) traverse the membrane as a helical segment. Residues 114–116 (GFS) are Periplasmic-facing. Residues 117-140 (LYGLFTSTILFGFGTLALVFLFSF) form a helical membrane-spanning segment. Residues 141–146 (KFNQRS) are Cytoplasmic-facing. A helical membrane pass occupies residues 147–171 (LLMLILIGMILSGLFSALVSLLQYI). The Periplasmic portion of the chain corresponds to 172–193 (SDTEEKLPSIVFWLMGSFATSN). Residues 194 to 214 (WEKLLFFFVPFLLCSSILLSL) traverse the membrane as a helical segment. The Cytoplasmic segment spans residues 215 to 234 (SWRLNLLSLDEKEAKALGVK). A helical transmembrane segment spans residues 235–257 (MAPLRWLVIFLSGSLVACQVAIS). The Periplasmic portion of the chain corresponds to 258 to 264 (GSIGWVG). A helical membrane pass occupies residues 265 to 275 (LIIPHLSRMLV). At 276 to 278 (GAN) the chain is on the cytoplasmic side. The helical transmembrane segment at 279–304 (HQSLLPCTMLVGATYMLLVDNVARSL) threads the bilayer. The Periplasmic segment spans residues 305 to 310 (SDAEIP). A helical transmembrane segment spans residues 311-329 (ISILTALIGAPLFGVLVYK). Topologically, residues 330-337 (LKRGGMNE) are cytoplasmic.

The protein belongs to the binding-protein-dependent transport system permease family. FecCD subfamily. As to quaternary structure, the complex is composed of two ATP-binding proteins (MolC), two transmembrane proteins (MolB) and a solute-binding protein (MolA).

It is found in the cell inner membrane. With respect to regulation, the MolBCA complex shows a decrease in affinity in the presence of increasing concentrations of substrate and nucleotide. In terms of biological role, part of the ABC transporter complex MolBCA involved in molybdate import. Responsible for the translocation of the substrate across the membrane. Functions as a low-affinity molybdate transporter. The sequence is that of Molybdate import system permease protein MolB from Haemophilus influenzae (strain ATCC 51907 / DSM 11121 / KW20 / Rd).